The primary structure comprises 824 residues: Leucine--tRNA ligase (824 aa).

The 'HIGH' region motif lies at 42 to 52; that stretch reads PYPSGHLHMGH. The short motif at 581–585 is the 'KMSKS' region element; it reads KMSKS. Lysine 584 is a binding site for ATP.

This sequence belongs to the class-I aminoacyl-tRNA synthetase family.

It is found in the cytoplasm. It carries out the reaction tRNA(Leu) + L-leucine + ATP = L-leucyl-tRNA(Leu) + AMP + diphosphate. This Syntrophomonas wolfei subsp. wolfei (strain DSM 2245B / Goettingen) protein is Leucine--tRNA ligase.